Reading from the N-terminus, the 533-residue chain is Receptor homology region, transmembrane domain- and RING domain-containing protein 1 (533 aa).

The signal sequence occupies residues M1 to A26. The Lumenal segment spans residues N27 to S167. N34 carries an N-linked (GlcNAc...) asparagine glycan. A disulfide bond links C68 and C91. Residues A84–K145 enclose the PA domain. The helical transmembrane segment at I168–F188 threads the bilayer. Topologically, residues V189–C533 are cytoplasmic. Residues C236–K278 form an RING-type; atypical zinc finger. Disordered regions lie at residues S309–Q329 and L440–A476. Residues P448–L463 show a composition bias toward polar residues.

The protein resides in the prevacuolar compartment membrane. It localises to the protein storage vacuole membrane. Its subcellular location is the golgi apparatus membrane. Involved in the trafficking of vacuolar proteins. Functions probably as a sorting receptor for protein trafficking to the protein storage vacuole (PSV) by binding the C-terminal vacuolar sorting determinant (VSD) of vacuolar-sorted proteins. The protein is Receptor homology region, transmembrane domain- and RING domain-containing protein 1 of Oryza sativa subsp. japonica (Rice).